A 141-amino-acid polypeptide reads, in one-letter code: Transcription antitermination protein NusB (141 aa).

This sequence belongs to the NusB family.

In terms of biological role, involved in transcription antitermination. Required for transcription of ribosomal RNA (rRNA) genes. Binds specifically to the boxA antiterminator sequence of the ribosomal RNA (rrn) operons. The chain is Transcription antitermination protein NusB from Neisseria meningitidis serogroup C (strain 053442).